Reading from the N-terminus, the 546-residue chain is Protein RDR1 (546 aa).

Residues 20 to 46 (CVPCRERKRKCNGKSPCEMCVAYGYVC) constitute a DNA-binding region (zn(2)-C6 fungal-type).

The protein localises to the nucleus. Its function is as follows. Transcriptional repressor of multidrug resistance genes, such as PDR5. Required for growth on non-fermentable carbon sources like lactate or glycerol. This chain is Protein RDR1 (RDR1), found in Saccharomyces cerevisiae (strain ATCC 204508 / S288c) (Baker's yeast).